A 650-amino-acid polypeptide reads, in one-letter code: Acetyl-coenzyme A synthetase (650 aa).

CoA is bound by residues Arg191–Arg194, Thr311, and Asn335. ATP contacts are provided by residues Gly387 to Pro389, Asp411 to Thr416, Asp500, and Arg515. Ser523 contacts CoA. Arg526 is an ATP binding site. Mg(2+) is bound by residues Val537, His539, and Val542. Arg584 is a CoA binding site. An N6-acetyllysine modification is found at Lys609.

It belongs to the ATP-dependent AMP-binding enzyme family. It depends on Mg(2+) as a cofactor. Acetylated. Deacetylation by the SIR2-homolog deacetylase activates the enzyme.

The enzyme catalyses acetate + ATP + CoA = acetyl-CoA + AMP + diphosphate. Its function is as follows. Catalyzes the conversion of acetate into acetyl-CoA (AcCoA), an essential intermediate at the junction of anabolic and catabolic pathways. AcsA undergoes a two-step reaction. In the first half reaction, AcsA combines acetate with ATP to form acetyl-adenylate (AcAMP) intermediate. In the second half reaction, it can then transfer the acetyl group from AcAMP to the sulfhydryl group of CoA, forming the product AcCoA. This is Acetyl-coenzyme A synthetase from Shewanella sp. (strain MR-7).